The primary structure comprises 142 residues: Large ribosomal subunit protein uL11 (142 aa).

Belongs to the universal ribosomal protein uL11 family. Part of the ribosomal stalk of the 50S ribosomal subunit. Interacts with L10 and the large rRNA to form the base of the stalk. L10 forms an elongated spine to which L12 dimers bind in a sequential fashion forming a multimeric L10(L12)X complex. In terms of processing, one or more lysine residues are methylated.

Functionally, forms part of the ribosomal stalk which helps the ribosome interact with GTP-bound translation factors. In Serratia marcescens, this protein is Large ribosomal subunit protein uL11.